Here is a 449-residue protein sequence, read N- to C-terminus: Elongation factor 1-alpha 1 (449 aa).

The tr-type G domain maps to 5–230; sequence KFHINIVVIG…DQINEPKRPS (226 aa). Positions 14–21 are G1; sequence GHVDSGKS. Residue 14–21 participates in GTP binding; it reads GHVDSGKS. Lys55 carries the post-translational modification N6,N6-dimethyllysine. A G2 region spans residues 70–74; it reads GITID. Lys79 bears the N6,N6,N6-trimethyllysine mark. A G3 region spans residues 91–94; sequence DAPG. GTP-binding positions include 91–95 and 153–156; these read DAPGH and NKMD. Residues 153-156 form a G4 region; the sequence is NKMD. Lys187 carries the N6,N6,N6-trimethyllysine modification. Residues 194–196 are G5; that stretch reads SGF. An N6-methyllysine modification is found at Lys261. N6,N6,N6-trimethyllysine is present on residues Lys306 and Lys396. Residues Lys438 and Lys441 each participate in a glycyl lysine isopeptide (Lys-Gly) (interchain with G-Cter in ubiquitin) cross-link.

The protein belongs to the TRAFAC class translation factor GTPase superfamily. Classic translation factor GTPase family. EF-Tu/EF-1A subfamily.

It localises to the cytoplasm. In terms of biological role, this protein promotes the GTP-dependent binding of aminoacyl-tRNA to the A-site of ribosomes during protein biosynthesis. The protein is Elongation factor 1-alpha 1 (A1) of Arabidopsis thaliana (Mouse-ear cress).